Reading from the N-terminus, the 418-residue chain is E3 ubiquitin-protein ligase makorin-2 (418 aa).

2 consecutive C3H1-type zinc fingers follow at residues 2–29 (NTKH…HDLA) and 31–58 (SKPS…HVKP). The tract at residues 76 to 100 (ESTPPLLPTQEAAAPVTKSAPQRRE) is disordered. The segment at 164 to 191 (DAPQQLCPFAQAGGCHYGESCPYIHGNV) adopts a C3H1-type 3 zinc-finger fold. Positions 192 to 221 (CEICGLQVLHPYDQEQRGHHEKLCMANFER) are makorin-type Cys-His. The segment at 237-291 (CSICMERVYDKQSPSERRFGILSNCHHTYCLACIRQWRCARQFENPVIKSCPECR) adopts an RING-type zinc-finger fold. A C3H1-type 4 zinc finger spans residues 320–349 (GMGKKACKYFDQGRGTCPFGGKCLYLHAYP).

The protein resides in the cytoplasm. The protein localises to the nucleus. The enzyme catalyses S-ubiquitinyl-[E2 ubiquitin-conjugating enzyme]-L-cysteine + [acceptor protein]-L-lysine = [E2 ubiquitin-conjugating enzyme]-L-cysteine + N(6)-ubiquitinyl-[acceptor protein]-L-lysine.. It functions in the pathway protein modification; protein ubiquitination. In terms of biological role, E3 ubiquitin ligase catalyzing the covalent attachment of ubiquitin moieties onto substrate proteins. Inhibits neurogenesis and axis formation during embryonic development by modulating the phosphatidylinositol 3-kinase (PI3K) pathway. Acts downstream of PI3K and akt1 to up-regulate gsk3b mRNA expression. The sequence is that of E3 ubiquitin-protein ligase makorin-2 (mkrn2) from Xenopus tropicalis (Western clawed frog).